We begin with the raw amino-acid sequence, 282 residues long: MTFIDMLGAAERQNHSMLCVGLDPEPARFPGRLAGDASKIYDFCAAIVDATADLVIAFKPQIAYFAAHRAEDQLERLMAHMRRVAPQVPVILDAKRGDIGSTAEQYAIEAFERYGADAVTLSPFMGFDSVAPYLKYHGKGSFLLCRTSNPGGDDLQNQRLASVDGQPLLYEHIARLAQGPWNLNGQLGLVVGATYPAEIERVRAVAPTLPLLIPGVGAQGGDAAATVRAGWRPGAPIIVNSSRAIIYASSGDDFADAARREALRTRDVLQAARADSLRVATP.

The active-site Proton donor is lysine 95.

Belongs to the OMP decarboxylase family. Type 2 subfamily.

It catalyses the reaction orotidine 5'-phosphate + H(+) = UMP + CO2. It participates in pyrimidine metabolism; UMP biosynthesis via de novo pathway; UMP from orotate: step 2/2. The polypeptide is Orotidine 5'-phosphate decarboxylase (Polaromonas naphthalenivorans (strain CJ2)).